The following is a 210-amino-acid chain: Large ribosomal subunit protein uL5 (210 aa).

The tract at residues 188–210 is disordered; it reads AKDDPKKAKTKRGPAYYAKKKKK. Residues 195-210 are compositionally biased toward basic residues; that stretch reads AKTKRGPAYYAKKKKK.

Belongs to the universal ribosomal protein uL5 family. As to quaternary structure, part of the 50S ribosomal subunit; part of the 5S rRNA/L5/L18/L25 subcomplex. Contacts the 5S rRNA and the P site tRNA. Forms a bridge to the 30S subunit in the 70S ribosome.

This is one of the proteins that bind and probably mediate the attachment of the 5S RNA into the large ribosomal subunit, where it forms part of the central protuberance. In the 70S ribosome it contacts protein S13 of the 30S subunit (bridge B1b), connecting the 2 subunits; this bridge is implicated in subunit movement. Contacts the P site tRNA; the 5S rRNA and some of its associated proteins might help stabilize positioning of ribosome-bound tRNAs. The protein is Large ribosomal subunit protein uL5 of Cutibacterium acnes (strain DSM 16379 / KPA171202) (Propionibacterium acnes).